The chain runs to 566 residues: Urease subunit alpha (566 aa).

The Urease domain maps to 128 to 566 (GGIDTHIHFI…LPMAQRYFLF (439 aa)). Ni(2+)-binding residues include H133, H135, and K216. K216 is modified (N6-carboxylysine). H218 contributes to the substrate binding site. Ni(2+) contacts are provided by H245 and H271. H319 (proton donor) is an active-site residue. Position 359 (D359) interacts with Ni(2+).

Belongs to the metallo-dependent hydrolases superfamily. Urease alpha subunit family. As to quaternary structure, heterotrimer of UreA (gamma), UreB (beta) and UreC (alpha) subunits. Three heterotrimers associate to form the active enzyme. Requires Ni cation as cofactor. In terms of processing, carboxylation allows a single lysine to coordinate two nickel ions.

The protein resides in the cytoplasm. The catalysed reaction is urea + 2 H2O + H(+) = hydrogencarbonate + 2 NH4(+). It participates in nitrogen metabolism; urea degradation; CO(2) and NH(3) from urea (urease route): step 1/1. The polypeptide is Urease subunit alpha (Pseudomonas fluorescens (strain Pf0-1)).